Consider the following 769-residue polypeptide: Glutathione biosynthesis bifunctional protein GshAB (769 aa).

The segment at methionine 1–isoleucine 347 is glutamate--cysteine ligase. The ATP-grasp domain occupies lysine 514–phenylalanine 768. Serine 541–arginine 599 provides a ligand contact to ATP. Residues aspartate 721, glutamate 738, and asparagine 740 each contribute to the Mg(2+) site. 3 residues coordinate Mn(2+): aspartate 721, glutamate 738, and asparagine 740.

It in the N-terminal section; belongs to the glutamate--cysteine ligase type 1 family. Type 2 subfamily. As to quaternary structure, monomer. Requires Mg(2+) as cofactor. The cofactor is Mn(2+).

The enzyme catalyses L-cysteine + L-glutamate + ATP = gamma-L-glutamyl-L-cysteine + ADP + phosphate + H(+). It carries out the reaction gamma-L-glutamyl-L-cysteine + glycine + ATP = glutathione + ADP + phosphate + H(+). The protein operates within sulfur metabolism; glutathione biosynthesis; glutathione from L-cysteine and L-glutamate: step 1/2. It functions in the pathway sulfur metabolism; glutathione biosynthesis; glutathione from L-cysteine and L-glutamate: step 2/2. Functionally, synthesizes glutathione from L-glutamate and L-cysteine via gamma-L-glutamyl-L-cysteine. This Listeria innocua serovar 6a (strain ATCC BAA-680 / CLIP 11262) protein is Glutathione biosynthesis bifunctional protein GshAB.